The following is an 888-amino-acid chain: Calcium-transporting ATPase 1 (888 aa).

Helical transmembrane passes span 53-75 (IFAQINDVLVYVLIIAALISAFV), 79-97 (ADASIIALVVVLNAVIGVV), 246-266 (VGKYLGFVAVAICIVMFLIGF), and 283-303 (AVAAIPEGLPAIVSIVLAIGV). Valine 284, alanine 285, isoleucine 287, and glutamate 289 together coordinate Ca(2+). The active-site 4-aspartylphosphate intermediate is aspartate 331. A run of 6 helical transmembrane segments spans residues 675-695 (ILFLLSCNFGEIITLFLAILL), 703-723 (PIHILWVNLITDTLPALSLGV), 747-767 (VPFLIFNGVVIGLLTLIAFIA), 791-811 (LLHAQTMAFVVLSFSQLVHSF), 831-851 (LVFSLLIGVLMQVCIISIPPL), and 865-885 (WGFVLLLSIIPLVVNEIIKLA). Ca(2+) is bound by residues asparagine 710 and aspartate 714.

Belongs to the cation transport ATPase (P-type) (TC 3.A.3) family. Type IIA subfamily.

The protein resides in the cell membrane. It carries out the reaction Ca(2+)(in) + ATP + H2O = Ca(2+)(out) + ADP + phosphate + H(+). With respect to regulation, inhibited by cyclopiazonic acid (CPA). Catalyzes the hydrolysis of ATP coupled with the transport of calcium. This Bacillus cereus (strain ATCC 10987 / NRS 248) protein is Calcium-transporting ATPase 1.